An 88-amino-acid chain; its full sequence is Elongation factor 1-beta (88 aa).

This sequence belongs to the EF-1-beta/EF-1-delta family.

Promotes the exchange of GDP for GTP in EF-1-alpha/GDP, thus allowing the regeneration of EF-1-alpha/GTP that could then be used to form the ternary complex EF-1-alpha/GTP/AAtRNA. The chain is Elongation factor 1-beta from Methanosphaera stadtmanae (strain ATCC 43021 / DSM 3091 / JCM 11832 / MCB-3).